The primary structure comprises 295 residues: 4-diphosphocytidyl-2-C-methyl-D-erythritol kinase (295 aa).

Residue Lys25 is part of the active site. 108-118 contacts ATP; sequence PMGSGLGGGSS. The active site involves Asp150.

Belongs to the GHMP kinase family. IspE subfamily.

The enzyme catalyses 4-CDP-2-C-methyl-D-erythritol + ATP = 4-CDP-2-C-methyl-D-erythritol 2-phosphate + ADP + H(+). It functions in the pathway isoprenoid biosynthesis; isopentenyl diphosphate biosynthesis via DXP pathway; isopentenyl diphosphate from 1-deoxy-D-xylulose 5-phosphate: step 3/6. Its function is as follows. Catalyzes the phosphorylation of the position 2 hydroxy group of 4-diphosphocytidyl-2C-methyl-D-erythritol. The protein is 4-diphosphocytidyl-2-C-methyl-D-erythritol kinase of Pasteurella multocida (strain Pm70).